We begin with the raw amino-acid sequence, 348 residues long: MIILGFESSCDETGVAAVSTERGLLAHALHTQIAMHQEYGGVVPELASRDHIRRAVPLARQVLAEAGLGLQDVDAVAYTAGPGLAGALLVGASVAQAFAWARGLPAIPIHHLEGHLLSPLLDDPRPDFPFVALLVSGGHTQLMRVDGVGRYALLGETLDDAAGEAFDKSAKLMGLGYPGGPALSRLAASGDPRRYALPRPMLHSGDLDFSFSGLKTAVLTRVKEAERDGGLDDAARADLAAATQAAIVEVLVAKAVRALKQTGLKRLVVAGGVGANQLLRELLAQALRPLGARAYFPPLALCTDNGAMIAFAAAERVKAGLASLQAGQHAFTVRPRWDLADICAGTPA.

2 residues coordinate Fe cation: H111 and H115. Substrate-binding positions include 134 to 138 (LVSGG), D167, G180, and N276. D304 is a Fe cation binding site.

It belongs to the KAE1 / TsaD family. Fe(2+) serves as cofactor.

The protein resides in the cytoplasm. The enzyme catalyses L-threonylcarbamoyladenylate + adenosine(37) in tRNA = N(6)-L-threonylcarbamoyladenosine(37) in tRNA + AMP + H(+). Functionally, required for the formation of a threonylcarbamoyl group on adenosine at position 37 (t(6)A37) in tRNAs that read codons beginning with adenine. Is involved in the transfer of the threonylcarbamoyl moiety of threonylcarbamoyl-AMP (TC-AMP) to the N6 group of A37, together with TsaE and TsaB. TsaD likely plays a direct catalytic role in this reaction. The polypeptide is tRNA N6-adenosine threonylcarbamoyltransferase (Bordetella petrii (strain ATCC BAA-461 / DSM 12804 / CCUG 43448)).